Reading from the N-terminus, the 349-residue chain is MISVGIVGGTGYTGVELLRLLLRHPQVTVRVLTSRTEAGKRVADMFPSLRGHTDLEFSDLNEDVLKQCDVVFFATPHGVAMKYAKGLVAAGVKVIDLAADFRLQNLEQFEKWYGLEHECPEILKDSVYGLSELNREKIKTAKVVGNPGCYPTTVQLGLAPLLQADVALIKPENIIIDAKSGVSGAGRKASLGMIYSENADNFKAYGVAGHRHHPEIVEALEHISGQKGVFDQIIFVPHLVPMIRGMLSTIYIDLTEEGANSDLQSLYEIYYANEKFVDVMPANSSPETRSVRGANELRIALYKPQPNKLVILSVQDNLVKGAAGQAVQNMNLMFNLDEDTGLTGIGLLP.

C149 is a catalytic residue.

The protein belongs to the NAGSA dehydrogenase family. Type 1 subfamily.

The protein localises to the cytoplasm. It carries out the reaction N-acetyl-L-glutamate 5-semialdehyde + phosphate + NADP(+) = N-acetyl-L-glutamyl 5-phosphate + NADPH + H(+). The protein operates within amino-acid biosynthesis; L-arginine biosynthesis; N(2)-acetyl-L-ornithine from L-glutamate: step 3/4. Catalyzes the NADPH-dependent reduction of N-acetyl-5-glutamyl phosphate to yield N-acetyl-L-glutamate 5-semialdehyde. The chain is N-acetyl-gamma-glutamyl-phosphate reductase from Acinetobacter baylyi (strain ATCC 33305 / BD413 / ADP1).